The following is a 587-amino-acid chain: Pentatricopeptide repeat-containing protein OGR1, mitochondrial (587 aa).

The transit peptide at 1-30 directs the protein to the mitochondrion; the sequence is MSVSAAARHLESLLPRLASLRHYLQFHARL. 8 PPR repeats span residues 145 to 179, 200 to 203, 217 to 251, 252 to 286, 287 to 315, 319 to 349, 351 to 381, and 383 to 417; these read DVRL…DVAT, FHRL, NEVT…GLDR, NVRV…DQTL, VSYN…MPTR, DGVT…MRVA, NMKH…MPFP, and DIVL…GSNV. The interval 386–461 is type E motif; that stretch reads LWQTLLGAAK…VPGFSYTEID (76 aa). Positions 462 to 492 are type E(+) motif; that stretch reads GVMHKFINGDKEHPRWQEIYRALEDIVSRIS. Residues 493 to 587 are type DYW motif; the sequence is ELGYEPETSN…DGQCSCRDYW (95 aa).

The protein localises to the mitochondrion. Involved in multiple sites RNA editing events in mitochondria. Essential for C-to-U RNA editing at seven specific sites of nad2, nad4, cox2, cox3 and ccmC transcripts, all coding for proteins involved in the mitochondrial electron transport chain coupled to ATP generation. Required for normal growth and development. This is Pentatricopeptide repeat-containing protein OGR1, mitochondrial from Oryza sativa subsp. japonica (Rice).